Here is a 750-residue protein sequence, read N- to C-terminus: Catalase-peroxidase 1 (750 aa).

Residues 90 to 238 constitute a cross-link (tryptophyl-tyrosyl-methioninium (Trp-Tyr) (with M-264)); the sequence is WHSAGTYRVM…VSAAHMGLIY (149 aa). H91 (proton acceptor) is an active-site residue. The segment at 199-218 is disordered; it reads NEGHKESGVIDGSESKKGHK. The segment covering 200–218 has biased composition (basic and acidic residues); it reads EGHKESGVIDGSESKKGHK. A cross-link (tryptophyl-tyrosyl-methioninium (Tyr-Met) (with W-90)) is located at residues 238-264; the sequence is YVNPEGPDGIPDPVAAARDIRTTFSRM. H279 lines the heme b pocket.

It belongs to the peroxidase family. Peroxidase/catalase subfamily. Homodimer or homotetramer. Predominantly homodimeric. Heme b serves as cofactor. Formation of the three residue Trp-Tyr-Met cross-link is important for the catalase, but not the peroxidase activity of the enzyme.

The protein localises to the cytoplasm. The enzyme catalyses H2O2 + AH2 = A + 2 H2O. The catalysed reaction is 2 H2O2 = O2 + 2 H2O. Its function is as follows. Bifunctional enzyme with both catalase and broad-spectrum peroxidase activity. This chain is Catalase-peroxidase 1, found in Pyricularia oryzae (strain 70-15 / ATCC MYA-4617 / FGSC 8958) (Rice blast fungus).